The sequence spans 631 residues: tRNA uridine 5-carboxymethylaminomethyl modification enzyme MnmG (631 aa).

FAD-binding positions include 13–18 (GGGHAG), Val125, and Ser180. 273–287 (GPRYCPSIEDKVMRF) lines the NAD(+) pocket. Gln370 is a binding site for FAD.

Belongs to the MnmG family. In terms of assembly, homodimer. Heterotetramer of two MnmE and two MnmG subunits. The cofactor is FAD.

It is found in the cytoplasm. Its function is as follows. NAD-binding protein involved in the addition of a carboxymethylaminomethyl (cmnm) group at the wobble position (U34) of certain tRNAs, forming tRNA-cmnm(5)s(2)U34. The chain is tRNA uridine 5-carboxymethylaminomethyl modification enzyme MnmG from Vibrio parahaemolyticus serotype O3:K6 (strain RIMD 2210633).